Consider the following 620-residue polypeptide: Aspartic protease 1 (620 aa).

Topologically, residues 1–110 (MSPSSRFRNL…LGKAVGLSTS (110 aa)) are cytoplasmic. Residues 1–258 (MSPSSRFRNL…SKKDDGNLSG (258 aa)) constitute a propeptide that is removed on maturation. The tract at residues 27-31 (YASLL) is important for proper cellular trafficking. Residues 111–131 (VICVVALFGIVCLCLYGLVNF) form a helical; Signal-anchor for type II membrane protein membrane-spanning segment. The Lumenal segment spans residues 132–620 (SFTSVETSPL…KQIGFARLKN (489 aa)). Residues 138–174 (TSPLDDPRNSPVMGELGNPQASTPSSARADTPARHDR) form a disordered region. The segment covering 156–165 (PQASTPSSAR) has biased composition (polar residues). The Peptidase A1 domain occupies 275 to 616 (YYTEIYVGSP…DYDNKQIGFA (342 aa)). Catalysis depends on residues D293 and D476. A disulfide bridge connects residues C513 and C550.

It belongs to the peptidase A1 family. Proteolytically cleaved into the soluble active mature form by, at least, cysteine protease CPL. Undergoes at least four processing steps; the first cleavage removes the propeptide resulting in the production of a soluble 45 kDa protein, which is further processed into a 35 kDa form followed by an additional processing into the final active 30 kDa form.

Its subcellular location is the membrane. It is found in the vacuole. Aspartyl protease which is dispensable for protein degradation in the vacuolar compartment (VAC) or for tachyzoite and bradyzoite viability. The protein is Aspartic protease 1 of Toxoplasma gondii.